Consider the following 143-residue polypeptide: Transcriptional regulator MraZ (143 aa).

SpoVT-AbrB domains follow at residues 5-47 (TYTP…PRSE) and 76-119 (TDEQ…DAQA).

This sequence belongs to the MraZ family. Forms oligomers.

It is found in the cytoplasm. Its subcellular location is the nucleoid. The polypeptide is Transcriptional regulator MraZ (Mycobacterium ulcerans (strain Agy99)).